The sequence spans 334 residues: Malate dehydrogenase 2 (334 aa).

19-25 (IGAGKVG) serves as a coordination point for NAD(+). 2 residues coordinate substrate: Arg-100 and Arg-106. NAD(+) is bound by residues Asn-113 and 136–138 (VSN). Residues Asn-138 and Arg-169 each coordinate substrate. The active-site Proton acceptor is the His-193.

This sequence belongs to the LDH/MDH superfamily.

It carries out the reaction (S)-malate + NAD(+) = oxaloacetate + NADH + H(+). Its function is as follows. Catalyzes the reversible oxidation of malate to oxaloacetate. The sequence is that of Malate dehydrogenase 2 from Aquifex aeolicus (strain VF5).